The chain runs to 525 residues: MESAQIHSTRDSLFILWLTTLLVSVLATAAYIKFQSRPRPYSGFPLVTLGGPSETDSSHAANWFRRGRALVNKGLSELSGAFQISNGSGYWIILPSKYMDELRNHPDMSLRDALREENFPNYRGFDGFRQAFKDSTFTQEVIRVKVTQSLGLITANLANECQHALQENLGESREWQQRFIIEDILNIVAQLTSRVFLGERLCRDKEWLQITKEYARNSFMGSEELRQCLPLTRPLMQFFMPACTQLRKFSAAARRLIDPEVQARKRRAEEAIKLGKKPPKVEDTIGWMVEVARGRQVDYVGGQLALSIAAIHSSTDNLSKAVVKLCEMPEIVAPLREEITTVLESTDGWSKPALYRMKLLDSFLKEVQRLAPFTIVGMHRRVMKGYVLSDGTHLPKNSRIMVMNDKLRDSSVYEDPDTFKYDRFARLREQPGQEDQHQLASTSSEFATFGHGEHACPGRFFAANQLKIIMACLLLKYDFCFQPGQAEKARVIPFEMVETIDPTLKIEVRRRSEELDVTKVAKETA.

A helical transmembrane segment spans residues 12 to 32; it reads SLFILWLTTLLVSVLATAAYI. Residues Asn-86 and Asn-317 are each glycosylated (N-linked (GlcNAc...) asparagine). Cys-456 lines the heme pocket.

This sequence belongs to the cytochrome P450 family. It depends on heme as a cofactor.

It is found in the membrane. It participates in mycotoxin biosynthesis. Cytochrome P450 monooxygenase; part of the gene cluster that mediates the biosynthesis of the diterpene glucoside brassicicene C. In the first step of the brassicicene C biosynthesis, the bifunctional diterpene synthase bsc8 that possesses both prenyl transferase and terpene cyclase activity, converts isopentenyl diphosphate and dimethylallyl diphosphate into geranylgeranyl diphosphate (GGDP) that is further converted into fusicocca-2,10(14)-diene, the first precursor for brassicicene C. Fusicocca-2,10(14)-diene is then substrate of cytochrome P450 monooxygenase bsc1 for hydroxylation at the C-8 position. Oxidation at C-16 position to aldehyde is then catalyzed by the cytochrome P450 monooyxygenase bsc7, yielding fusicocca-2,10(14)-diene-8-beta,16-diol. Follows the isomerization of the double bond and reduction of aldehyde to alcohol catalyzed by the short-chain dehydrogenase/reductase bsc3 to yield the diol compound fusicocca-1,10(14)-diene-8 beta,16-diol. The next step is the oxidation at the C-3 position of fusicocca-2,10(14)-diene-8-beta,16-diol catalyzed by the alpha-ketoglutarate dependent dioxygenase bsc9, to produce a triol compound. Methylation of the hydroxy group at position 16 is performed by the methyltransferase bsc6. 16-O-methylation is followed by oxidation at the C-13 position to ketone and an alkyl shift of the methyl group leads to brassicicene C. Although the probable acetyltransferase bsc4 is included in the gene cluster, no acetylation reactions are necessary for brassicicene C biosynthesis. However, the fact that brassicicene E, which is a structurally related compound having an acetoxy group at position 12, was previously isolated from another strain of A.brassicicola suggests that the ATCC 96836 strain might also produce a small amount of brassicicene E. The sequence is that of Cytochrome P450 monooxygenase bsc2 from Alternaria brassicicola (Dark leaf spot agent).